Here is a 505-residue protein sequence, read N- to C-terminus: Maturase K (505 aa).

The protein belongs to the intron maturase 2 family. MatK subfamily.

The protein localises to the plastid. It localises to the chloroplast. Its function is as follows. Usually encoded in the trnK tRNA gene intron. Probably assists in splicing its own and other chloroplast group II introns. This is Maturase K from Gomphrena haageana (Haage's globe-amaranth).